The sequence spans 473 residues: Mogroside IIIx synthase (473 aa).

His21 (proton acceptor) is an active-site residue. Asp123 (charge relay) is an active-site residue. UDP-alpha-D-glucose-binding residues include Thr274, Gln337, Trp355, Asn356, Ser357, Glu360, Asp376, and Gln377.

This sequence belongs to the UDP-glycosyltransferase family. In terms of tissue distribution, highly expressed in mature fruits.

It catalyses the reaction mogroside IIE + UDP-alpha-D-glucose = mogroside IIIX + UDP + H(+). It carries out the reaction mogroside III + UDP-alpha-D-glucose = siamenoside I + UDP + H(+). Its pathway is secondary metabolite biosynthesis; terpenoid biosynthesis. Its function is as follows. UDP-glycosyltransferase involved in the biosynthesis of cucurbitacin and mogroside tetracyclic triterpene natural products (e.g. siamenoside I and mogrosides IV, V and VI). Cucurbitacins have cytotoxic properties and exhibit deterrent taste as a defense barrier against herbivores. Mogrosides are nonsugar highly oxygenated compounds used as high-intensity zero-calorie sweeteners; they also possess pharmacological properties such as regulating immunity, lowering blood sugar and lipid levels, protecting the liver, and acting as antioxidants and antitumor agents. Catalyzes the branched glucosylations of mogroside II-E and mogroside III. This Siraitia grosvenorii (Monk's fruit) protein is Mogroside IIIx synthase.